The sequence spans 70 residues: UPF0519 protein D (70 aa).

Belongs to the UPF0519 family.

The sequence is that of UPF0519 protein D from Dictyostelium discoideum (Social amoeba).